The sequence spans 206 residues: ATP phosphoribosyltransferase (206 aa).

The protein belongs to the ATP phosphoribosyltransferase family. Short subfamily. In terms of assembly, heteromultimer composed of HisG and HisZ subunits.

The protein resides in the cytoplasm. It catalyses the reaction 1-(5-phospho-beta-D-ribosyl)-ATP + diphosphate = 5-phospho-alpha-D-ribose 1-diphosphate + ATP. Its pathway is amino-acid biosynthesis; L-histidine biosynthesis; L-histidine from 5-phospho-alpha-D-ribose 1-diphosphate: step 1/9. Its function is as follows. Catalyzes the condensation of ATP and 5-phosphoribose 1-diphosphate to form N'-(5'-phosphoribosyl)-ATP (PR-ATP). Has a crucial role in the pathway because the rate of histidine biosynthesis seems to be controlled primarily by regulation of HisG enzymatic activity. This is ATP phosphoribosyltransferase from Geobacillus sp. (strain WCH70).